A 130-amino-acid polypeptide reads, in one-letter code: Capsid protein (130 aa).

The viral RNA-binding stretch occupies residues 32-105 (EWISSNSRSQ…FATNSDCELI (74 aa)).

This sequence belongs to the Leviviricetes capsid protein family. As to quaternary structure, homodimer. The capsid proteins form dimers that assemble by group of 5. Twelve such pentamers are linked together with free dimers. The homodimers binds to the viral RNA via an operator hairpin, but also to many other RNA sequences in the viral genome; this interaction probably shifts the virus from the replicative to the assembly phase and ensures specific encapsidation of the viral genome.

The protein localises to the virion. Its function is as follows. Capsid protein self-assembles to form an icosahedral capsid with a T=3 symmetry, about 26 nm in diameter, and consisting of 89 capsid proteins dimers (178 capsid proteins). Involved in viral genome encapsidation through the interaction between a capsid protein dimer and the multiple packaging signals present in the RNA genome. The capsid also contains 1 copy of the A2 maturation protein. Acts as a translational repressor of viral replicase synthesis late in infection. This latter function is the result of capsid protein interaction with an RNA hairpin which contains the replicase ribosome-binding site. This chain is Capsid protein, found in Escherichia coli (Bacteriophage MS2).